The primary structure comprises 227 residues: UPF0758 protein Pcar_0065 (227 aa).

One can recognise an MPN domain in the interval 105 to 227 (RYTSPQAVFA…YVSLADRGVL (123 aa)). Residues H176, H178, and D189 each coordinate Zn(2+). Positions 176-189 (HNHPSGDPSPSRED) match the JAMM motif motif.

Belongs to the UPF0758 family.

This Syntrophotalea carbinolica (strain DSM 2380 / NBRC 103641 / GraBd1) (Pelobacter carbinolicus) protein is UPF0758 protein Pcar_0065.